Here is a 242-residue protein sequence, read N- to C-terminus: Leucyl/phenylalanyl-tRNA--protein transferase (242 aa).

The protein belongs to the L/F-transferase family.

The protein localises to the cytoplasm. It catalyses the reaction N-terminal L-lysyl-[protein] + L-leucyl-tRNA(Leu) = N-terminal L-leucyl-L-lysyl-[protein] + tRNA(Leu) + H(+). It carries out the reaction N-terminal L-arginyl-[protein] + L-leucyl-tRNA(Leu) = N-terminal L-leucyl-L-arginyl-[protein] + tRNA(Leu) + H(+). The catalysed reaction is L-phenylalanyl-tRNA(Phe) + an N-terminal L-alpha-aminoacyl-[protein] = an N-terminal L-phenylalanyl-L-alpha-aminoacyl-[protein] + tRNA(Phe). In terms of biological role, functions in the N-end rule pathway of protein degradation where it conjugates Leu, Phe and, less efficiently, Met from aminoacyl-tRNAs to the N-termini of proteins containing an N-terminal arginine or lysine. This Alcanivorax borkumensis (strain ATCC 700651 / DSM 11573 / NCIMB 13689 / SK2) protein is Leucyl/phenylalanyl-tRNA--protein transferase.